We begin with the raw amino-acid sequence, 276 residues long: Small ribosomal subunit protein uS2 (276 aa).

Residues 251 to 276 are disordered; that stretch reads AEEAPAAAEEAPAAEPAAEETPAAEA. The segment covering 252–276 has biased composition (low complexity); that stretch reads EEAPAAAEEAPAAEPAAEETPAAEA.

The protein belongs to the universal ribosomal protein uS2 family.

This is Small ribosomal subunit protein uS2 from Jannaschia sp. (strain CCS1).